The sequence spans 355 residues: Nicotinate-nucleotide--dimethylbenzimidazole phosphoribosyltransferase (355 aa).

Glu-321 serves as the catalytic Proton acceptor.

This sequence belongs to the CobT family.

The catalysed reaction is 5,6-dimethylbenzimidazole + nicotinate beta-D-ribonucleotide = alpha-ribazole 5'-phosphate + nicotinate + H(+). It participates in nucleoside biosynthesis; alpha-ribazole biosynthesis; alpha-ribazole from 5,6-dimethylbenzimidazole: step 1/2. Functionally, catalyzes the synthesis of alpha-ribazole-5'-phosphate from nicotinate mononucleotide (NAMN) and 5,6-dimethylbenzimidazole (DMB). The protein is Nicotinate-nucleotide--dimethylbenzimidazole phosphoribosyltransferase of Desulfotalea psychrophila (strain LSv54 / DSM 12343).